Consider the following 78-residue polypeptide: Large ribosomal subunit protein bL31 (78 aa).

Belongs to the bacterial ribosomal protein bL31 family. Type A subfamily. Part of the 50S ribosomal subunit.

Its function is as follows. Binds the 23S rRNA. This chain is Large ribosomal subunit protein bL31 (rpmE), found in Rickettsia typhi (strain ATCC VR-144 / Wilmington).